The primary structure comprises 76 residues: uncharacterized protein (76 aa).

A run of 3 helical transmembrane segments spans residues 1 to 21 (MTAI…HLQL), 35 to 55 (CFDI…LLII), and 56 to 76 (NNKF…NTMI).

The protein localises to the cell membrane. This is an uncharacterized protein from Borreliella burgdorferi (strain ATCC 35210 / DSM 4680 / CIP 102532 / B31) (Borrelia burgdorferi).